We begin with the raw amino-acid sequence, 256 residues long: Deoxyribose-phosphate aldolase (256 aa).

Asp102 functions as the Proton donor/acceptor in the catalytic mechanism. Lys165 functions as the Schiff-base intermediate with acetaldehyde in the catalytic mechanism. Lys197 (proton donor/acceptor) is an active-site residue.

The protein belongs to the DeoC/FbaB aldolase family. DeoC type 2 subfamily.

Its subcellular location is the cytoplasm. It carries out the reaction 2-deoxy-D-ribose 5-phosphate = D-glyceraldehyde 3-phosphate + acetaldehyde. The protein operates within carbohydrate degradation; 2-deoxy-D-ribose 1-phosphate degradation; D-glyceraldehyde 3-phosphate and acetaldehyde from 2-deoxy-alpha-D-ribose 1-phosphate: step 2/2. Its function is as follows. Catalyzes a reversible aldol reaction between acetaldehyde and D-glyceraldehyde 3-phosphate to generate 2-deoxy-D-ribose 5-phosphate. This Shewanella sp. (strain ANA-3) protein is Deoxyribose-phosphate aldolase.